The sequence spans 299 residues: MNQEDKEKPIEEASSSMEREHMFDKVVTPSDVGKLNRLVIPKQHAERYFPLDNSTTNDSNKGLLLNFEDRSGNSWRFRYSYWNSSQSYVMTKGWSRFVKDKKLDAGDIVSFQRDSCNKDKLYIDWRRRPKIPDHHHQQFAGAMFPRFYTFPHPQMPTNYETHNLYHRFHQRDLGIGYYVRSMERSHPTAVIESVPVMMQRRAQVASMASRGEKRLRLFGVDMECGGGGGSVNSTEEESSSSGGSIPRGRVSMVGAGSLLQLRLVSSDDESLVAMEAASLEDHHFFTKKGKPSLSFDLDR.

The interval 1-21 is disordered; sequence MNQEDKEKPIEEASSSMEREH. A DNA-binding region (TF-B3) is located at residues 23-129; sequence FDKVVTPSDV…KLYIDWRRRP (107 aa). Residues 226 to 249 are disordered; that stretch reads GGGGSVNSTEEESSSSGGSIPRGR.

The protein resides in the nucleus. In terms of biological role, regulates lateral organ growth. Functionally redundant with NGA1, NGA3 and NGA4. The chain is B3 domain-containing transcription factor NGA2 (NGA2) from Arabidopsis thaliana (Mouse-ear cress).